We begin with the raw amino-acid sequence, 340 residues long: Glyceraldehyde-3-phosphate dehydrogenase (340 aa).

NAD(+)-binding positions include 11–12 (SI) and Gly111. 140-142 (SCN) contributes to the D-glyceraldehyde 3-phosphate binding site. The active-site Nucleophile is the Cys141. Arg169 is a binding site for NAD(+). 195–196 (HG) is a D-glyceraldehyde 3-phosphate binding site. Gln303 contributes to the NAD(+) binding site.

This sequence belongs to the glyceraldehyde-3-phosphate dehydrogenase family. Homotetramer.

It is found in the cytoplasm. The enzyme catalyses D-glyceraldehyde 3-phosphate + phosphate + NADP(+) = (2R)-3-phospho-glyceroyl phosphate + NADPH + H(+). It carries out the reaction D-glyceraldehyde 3-phosphate + phosphate + NAD(+) = (2R)-3-phospho-glyceroyl phosphate + NADH + H(+). It participates in carbohydrate degradation; glycolysis; pyruvate from D-glyceraldehyde 3-phosphate: step 1/5. In Methanococcus vannielii (strain ATCC 35089 / DSM 1224 / JCM 13029 / OCM 148 / SB), this protein is Glyceraldehyde-3-phosphate dehydrogenase.